The following is a 377-amino-acid chain: Lipoyl synthase, mitochondrial (377 aa).

[4Fe-4S] cluster-binding residues include Cys-98, Cys-103, Cys-109, Cys-128, Cys-132, Cys-135, and Ser-343. Positions 113 to 332 (KKSEATATIM…RDTALDMGFL (220 aa)) constitute a Radical SAM core domain.

The protein belongs to the radical SAM superfamily. Lipoyl synthase family. [4Fe-4S] cluster is required as a cofactor.

The protein localises to the mitochondrion. It catalyses the reaction [[Fe-S] cluster scaffold protein carrying a second [4Fe-4S](2+) cluster] + N(6)-octanoyl-L-lysyl-[protein] + 2 oxidized [2Fe-2S]-[ferredoxin] + 2 S-adenosyl-L-methionine + 4 H(+) = [[Fe-S] cluster scaffold protein] + N(6)-[(R)-dihydrolipoyl]-L-lysyl-[protein] + 4 Fe(3+) + 2 hydrogen sulfide + 2 5'-deoxyadenosine + 2 L-methionine + 2 reduced [2Fe-2S]-[ferredoxin]. The protein operates within protein modification; protein lipoylation via endogenous pathway; protein N(6)-(lipoyl)lysine from octanoyl-[acyl-carrier-protein]: step 2/2. Catalyzes the radical-mediated insertion of two sulfur atoms into the C-6 and C-8 positions of the octanoyl moiety bound to the lipoyl domains of lipoate-dependent enzymes, thereby converting the octanoylated domains into lipoylated derivatives. This is Lipoyl synthase, mitochondrial from Candida tropicalis (strain ATCC MYA-3404 / T1) (Yeast).